Consider the following 910-residue polypeptide: Potassium/sodium hyperpolarization-activated cyclic nucleotide-gated channel 1 (910 aa).

The tract at residues 1–75 is disordered; it reads MEGGGKPNSA…PAGSFEDAEG (75 aa). Topologically, residues 1 to 131 are cytoplasmic; the sequence is MEGGGKPNSA…WIIHPYSDFR (131 aa). A helical membrane pass occupies residues 132–153; the sequence is FYWDLIMLIMMVGNLVIIPVGI. The Extracellular segment spans residues 154–162; it reads TFFTEQTTT. Residues 163–183 traverse the membrane as a helical segment; sequence PWIIFNVASDTVFLLDLIMNF. The Cytoplasmic portion of the chain corresponds to 184-204; sequence RTGTVNEDSSEIILDPKVIKM. A helical transmembrane segment spans residues 205 to 225; that stretch reads NYLKSWFVVDFISSIPVDYIF. The Extracellular portion of the chain corresponds to 226–249; that stretch reads LIVEKGMDSEVYKTARALRIVRFT. A helical; Voltage-sensor membrane pass occupies residues 250-270; sequence KILSLLRLLRLSRLIRYIHQW. Residues 271 to 284 lie on the Cytoplasmic side of the membrane; the sequence is EEIFHMTYDLASAV. The helical transmembrane segment at 285-307 threads the bilayer; that stretch reads VRIFNLIGMMLLLCHWDGCLQFL. The Extracellular segment spans residues 308–333; sequence VPLLQDFPPDCWVSLNEMVNDSWGKQ. A glycan (N-linked (GlcNAc...) asparagine) is linked at Asn-327. The segment at residues 334–355 is an intramembrane region (pore-forming); the sequence is YSYALFKAMSHMLCIGYGAQAP. The short motif at 347–351 is the Selectivity filter element; it reads CIGYG. Over 356–360 the chain is Extracellular; the sequence is VSMSD. A helical transmembrane segment spans residues 361 to 381; it reads LWITMLSMIVGATCYAMFVGH. Residues 382–910 are Cytoplasmic-facing; sequence ATALIQSLDS…AEKPRFASNL (529 aa). 7 residues coordinate 3',5'-cyclic AMP: Gly-528, Glu-529, Cys-531, Arg-538, Thr-539, Arg-579, and Arg-582. Disordered stretches follow at residues 634–681, 771–791, and 865–910; these read TALN…QPSA, QQQQ…VHKS, and QMSS…ASNL. Residues 639–680 show a composition bias toward low complexity; the sequence is TSSTTTPTSRMRTQSPPVYTATSLSHSNLHSPSPSTQTPQPS. The segment covering 780–791 has biased composition (polar residues); that stretch reads GSSTPKNEVHKS. The span at 875-885 shows a compositional bias: pro residues; that stretch reads RGVPPAPPPPA. Residues 900–910 are compositionally biased toward basic and acidic residues; it reads DAEKPRFASNL.

The protein belongs to the potassium channel HCN family. Homotetramer. Heterotetramer with HCN2. The potassium channel is composed of a homo- or heterotetrameric complex of pore-forming subunits. Interacts with KCNE2. Interacts with the SH3 domain of CSK. N-glycosylated. As to expression, predominantly expressed in brain. Highly expressed in apical dendrites of pyramidal neurons in the cortex, in the layer corresponding to the stratum lacunosum-moleculare in the hippocampus and in axons of basket cells in the cerebellum (at protein level). Expressed in a subset of elongated cells in taste buds.

Its subcellular location is the cell membrane. The catalysed reaction is Na(+)(in) = Na(+)(out). The enzyme catalyses K(+)(in) = K(+)(out). Its activity is regulated as follows. Activated by cAMP. cAMP binding causes a conformation change that leads to the assembly of an active tetramer and channel opening. Compared to other family members, cAMP has less stimulatory effect on HCN1 because part of the molecules already contain bound cAMP and form homotetramers when cAMP levels are low, this inherent tetramerization in HCN1 results in a weaker response to increased cAMP. Functionally, hyperpolarization-activated ion channel that are permeable to sodium and potassium ions. Exhibits weak selectivity for potassium over sodium ions. Contributes to the native pacemaker currents in heart (If) and in neurons (Ih). Participates in cerebellar mechanisms of motor learning. May mediate responses to sour stimuli. The sequence is that of Potassium/sodium hyperpolarization-activated cyclic nucleotide-gated channel 1 (Hcn1) from Mus musculus (Mouse).